A 176-amino-acid chain; its full sequence is RNA pyrophosphohydrolase (176 aa).

A Nudix hydrolase domain is found at 6 to 149 (GYRPNVGIVI…KRDVYRRVMK (144 aa)). Residues 38-59 (GGINPGESAEQAMYRELFEEVG) carry the Nudix box motif.

The protein belongs to the Nudix hydrolase family. RppH subfamily. Requires a divalent metal cation as cofactor.

Its function is as follows. Accelerates the degradation of transcripts by removing pyrophosphate from the 5'-end of triphosphorylated RNA, leading to a more labile monophosphorylated state that can stimulate subsequent ribonuclease cleavage. The polypeptide is RNA pyrophosphohydrolase (Escherichia fergusonii (strain ATCC 35469 / DSM 13698 / CCUG 18766 / IAM 14443 / JCM 21226 / LMG 7866 / NBRC 102419 / NCTC 12128 / CDC 0568-73)).